Consider the following 392-residue polypeptide: Formate-dependent phosphoribosylglycinamide formyltransferase (392 aa).

Residues E22–L23 and E82 contribute to the N(1)-(5-phospho-beta-D-ribosyl)glycinamide site. Residues R114, K155, S160–Q165, E195–V198, and E203 each bind ATP. The region spanning R119–L308 is the ATP-grasp domain. Residues E267 and E279 each contribute to the Mg(2+) site. N(1)-(5-phospho-beta-D-ribosyl)glycinamide contacts are provided by residues D286, K355, and R362–R363.

Belongs to the PurK/PurT family. In terms of assembly, homodimer.

The enzyme catalyses N(1)-(5-phospho-beta-D-ribosyl)glycinamide + formate + ATP = N(2)-formyl-N(1)-(5-phospho-beta-D-ribosyl)glycinamide + ADP + phosphate + H(+). It participates in purine metabolism; IMP biosynthesis via de novo pathway; N(2)-formyl-N(1)-(5-phospho-D-ribosyl)glycinamide from N(1)-(5-phospho-D-ribosyl)glycinamide (formate route): step 1/1. Functionally, involved in the de novo purine biosynthesis. Catalyzes the transfer of formate to 5-phospho-ribosyl-glycinamide (GAR), producing 5-phospho-ribosyl-N-formylglycinamide (FGAR). Formate is provided by PurU via hydrolysis of 10-formyl-tetrahydrofolate. This chain is Formate-dependent phosphoribosylglycinamide formyltransferase, found in Shigella sonnei (strain Ss046).